The primary structure comprises 476 residues: Bifunctional protein GlmU (476 aa).

Positions 1–232 (MGDLAAIILA…PVEVMGVNDR (232 aa)) are pyrophosphorylase. UDP-N-acetyl-alpha-D-glucosamine is bound by residues 9-12 (LAAG), Lys23, Gln75, and 80-81 (GT). Asp105 lines the Mg(2+) pocket. UDP-N-acetyl-alpha-D-glucosamine is bound by residues Gly142, Glu157, Asn172, and Asn230. A Mg(2+)-binding site is contributed by Asn230. The segment at 233–253 (AQLAEAGRFARQRINRELMLD) is linker. Positions 254–476 (GVTIVDPAAT…DGWKLKQRDQ (223 aa)) are N-acetyltransferase. UDP-N-acetyl-alpha-D-glucosamine is bound by residues Arg353 and Lys371. The Proton acceptor role is filled by His383. UDP-N-acetyl-alpha-D-glucosamine-binding residues include Tyr386 and Asn397. Acetyl-CoA is bound by residues 406 to 407 (NY), Ser425, Ala443, and Arg460.

In the N-terminal section; belongs to the N-acetylglucosamine-1-phosphate uridyltransferase family. This sequence in the C-terminal section; belongs to the transferase hexapeptide repeat family. Homotrimer. It depends on Mg(2+) as a cofactor.

It is found in the cytoplasm. The catalysed reaction is alpha-D-glucosamine 1-phosphate + acetyl-CoA = N-acetyl-alpha-D-glucosamine 1-phosphate + CoA + H(+). It catalyses the reaction N-acetyl-alpha-D-glucosamine 1-phosphate + UTP + H(+) = UDP-N-acetyl-alpha-D-glucosamine + diphosphate. It functions in the pathway nucleotide-sugar biosynthesis; UDP-N-acetyl-alpha-D-glucosamine biosynthesis; N-acetyl-alpha-D-glucosamine 1-phosphate from alpha-D-glucosamine 6-phosphate (route II): step 2/2. The protein operates within nucleotide-sugar biosynthesis; UDP-N-acetyl-alpha-D-glucosamine biosynthesis; UDP-N-acetyl-alpha-D-glucosamine from N-acetyl-alpha-D-glucosamine 1-phosphate: step 1/1. Its pathway is bacterial outer membrane biogenesis; LPS lipid A biosynthesis. In terms of biological role, catalyzes the last two sequential reactions in the de novo biosynthetic pathway for UDP-N-acetylglucosamine (UDP-GlcNAc). The C-terminal domain catalyzes the transfer of acetyl group from acetyl coenzyme A to glucosamine-1-phosphate (GlcN-1-P) to produce N-acetylglucosamine-1-phosphate (GlcNAc-1-P), which is converted into UDP-GlcNAc by the transfer of uridine 5-monophosphate (from uridine 5-triphosphate), a reaction catalyzed by the N-terminal domain. In Geobacter metallireducens (strain ATCC 53774 / DSM 7210 / GS-15), this protein is Bifunctional protein GlmU.